The sequence spans 388 residues: Chorismate synthase (388 aa).

Residues Arg39 and Arg45 each coordinate NADP(+). FMN contacts are provided by residues 130–132, 251–252, Gly296, 311–315, and Arg337; these read RSS, NA, and KPIPT.

The protein belongs to the chorismate synthase family. In terms of assembly, homotetramer. FMNH2 is required as a cofactor.

The enzyme catalyses 5-O-(1-carboxyvinyl)-3-phosphoshikimate = chorismate + phosphate. The protein operates within metabolic intermediate biosynthesis; chorismate biosynthesis; chorismate from D-erythrose 4-phosphate and phosphoenolpyruvate: step 7/7. Its function is as follows. Catalyzes the anti-1,4-elimination of the C-3 phosphate and the C-6 proR hydrogen from 5-enolpyruvylshikimate-3-phosphate (EPSP) to yield chorismate, which is the branch point compound that serves as the starting substrate for the three terminal pathways of aromatic amino acid biosynthesis. This reaction introduces a second double bond into the aromatic ring system. The polypeptide is Chorismate synthase (Streptococcus agalactiae serotype Ia (strain ATCC 27591 / A909 / CDC SS700)).